The primary structure comprises 463 residues: Asparagine--tRNA ligase (463 aa).

This sequence belongs to the class-II aminoacyl-tRNA synthetase family. In terms of assembly, homodimer.

The protein resides in the cytoplasm. It carries out the reaction tRNA(Asn) + L-asparagine + ATP = L-asparaginyl-tRNA(Asn) + AMP + diphosphate + H(+). This is Asparagine--tRNA ligase from Clostridium botulinum (strain ATCC 19397 / Type A).